We begin with the raw amino-acid sequence, 380 residues long: ATP phosphoribosyltransferase regulatory subunit (380 aa).

This sequence belongs to the class-II aminoacyl-tRNA synthetase family. HisZ subfamily. In terms of assembly, heteromultimer composed of HisG and HisZ subunits.

It localises to the cytoplasm. It functions in the pathway amino-acid biosynthesis; L-histidine biosynthesis; L-histidine from 5-phospho-alpha-D-ribose 1-diphosphate: step 1/9. Functionally, required for the first step of histidine biosynthesis. May allow the feedback regulation of ATP phosphoribosyltransferase activity by histidine. This is ATP phosphoribosyltransferase regulatory subunit from Thermoanaerobacter pseudethanolicus (strain ATCC 33223 / 39E) (Clostridium thermohydrosulfuricum).